Consider the following 414-residue polypeptide: 3-oxoacyl-[acyl-carrier-protein] synthase 2 (414 aa).

Residues 3-411 (KRRVVITGLG…GTNGTLVLSR (409 aa)) enclose the Ketosynthase family 3 (KS3) domain. Catalysis depends on for beta-ketoacyl synthase activity residues Cys164, His304, and His341.

The protein belongs to the thiolase-like superfamily. Beta-ketoacyl-ACP synthases family. Homodimer.

It carries out the reaction a fatty acyl-[ACP] + malonyl-[ACP] + H(+) = a 3-oxoacyl-[ACP] + holo-[ACP] + CO2. The enzyme catalyses (9Z)-hexadecenoyl-[ACP] + malonyl-[ACP] + H(+) = 3-oxo-(11Z)-octadecenoyl-[ACP] + holo-[ACP] + CO2. Its pathway is lipid metabolism; fatty acid biosynthesis. Involved in the type II fatty acid elongation cycle. Catalyzes the elongation of a wide range of acyl-ACP by the addition of two carbons from malonyl-ACP to an acyl acceptor. Can efficiently catalyze the conversion of palmitoleoyl-ACP (cis-hexadec-9-enoyl-ACP) to cis-vaccenoyl-ACP (cis-octadec-11-enoyl-ACP), an essential step in the thermal regulation of fatty acid composition. The polypeptide is 3-oxoacyl-[acyl-carrier-protein] synthase 2 (fabF) (Coxiella burnetii (strain RSA 493 / Nine Mile phase I)).